The primary structure comprises 453 residues: UPF0210 protein MM_0081 (453 aa).

It belongs to the UPF0210 family.

The polypeptide is UPF0210 protein MM_0081 (Methanosarcina mazei (strain ATCC BAA-159 / DSM 3647 / Goe1 / Go1 / JCM 11833 / OCM 88) (Methanosarcina frisia)).